Here is a 548-residue protein sequence, read N- to C-terminus: Chaperonin GroEL (548 aa).

ATP is bound by residues T29–P32, K50, D86–T90, G414, N478–A480, and D494.

It belongs to the chaperonin (HSP60) family. Forms a cylinder of 14 subunits composed of two heptameric rings stacked back-to-back. Interacts with the co-chaperonin GroES.

The protein localises to the cytoplasm. The enzyme catalyses ATP + H2O + a folded polypeptide = ADP + phosphate + an unfolded polypeptide.. Functionally, together with its co-chaperonin GroES, plays an essential role in assisting protein folding. The GroEL-GroES system forms a nano-cage that allows encapsulation of the non-native substrate proteins and provides a physical environment optimized to promote and accelerate protein folding. The protein is Chaperonin GroEL of Alcanivorax borkumensis (strain ATCC 700651 / DSM 11573 / NCIMB 13689 / SK2).